A 416-amino-acid polypeptide reads, in one-letter code: Gamma-glutamyl phosphate reductase (416 aa).

This sequence belongs to the gamma-glutamyl phosphate reductase family.

The protein resides in the cytoplasm. It carries out the reaction L-glutamate 5-semialdehyde + phosphate + NADP(+) = L-glutamyl 5-phosphate + NADPH + H(+). Its pathway is amino-acid biosynthesis; L-proline biosynthesis; L-glutamate 5-semialdehyde from L-glutamate: step 2/2. Its function is as follows. Catalyzes the NADPH-dependent reduction of L-glutamate 5-phosphate into L-glutamate 5-semialdehyde and phosphate. The product spontaneously undergoes cyclization to form 1-pyrroline-5-carboxylate. The polypeptide is Gamma-glutamyl phosphate reductase (Glaesserella parasuis serovar 5 (strain SH0165) (Haemophilus parasuis)).